A 129-amino-acid chain; its full sequence is Integration host factor subunit alpha (129 aa).

The segment at 87–129 is disordered; that stretch reads SALNGEAPPEDHAEIDAREEAAADAAEARGEDFDEEGMEDMEG. The span at 95–117 shows a compositional bias: basic and acidic residues; that stretch reads PEDHAEIDAREEAAADAAEARGE. A compositionally biased stretch (acidic residues) spans 118-129; the sequence is DFDEEGMEDMEG.

This sequence belongs to the bacterial histone-like protein family. As to quaternary structure, heterodimer of an alpha and a beta chain.

Functionally, this protein is one of the two subunits of integration host factor, a specific DNA-binding protein that functions in genetic recombination as well as in transcriptional and translational control. It is necessary for normal cell growth and the production of carotenoids in response to light. The sequence is that of Integration host factor subunit alpha (ihfA) from Myxococcus xanthus.